Here is a 286-residue protein sequence, read N- to C-terminus: MTQNHDPYSDAKELAGLTLGKATDYQAEYDASLLQGVPRSLNRNAINLTAESLPFHGADIWTAYELSWLNAKGKPMVAIADIQLSHASQNLIESKSFKLYLNSFNQTKFDNLDAVQKTLVKDLSECAQGDVTVKIIEPKSFGIQRVVELPGTCIDDLDIEVSDYDFNPEYLENSTDEKQIVAETLNSNLLKSNCLITSQPDWGSVMIRYQGPKIDREKLLRYLISFRQHNEFHEQCVERIFVDLKHYCHCAKLTVYARYTRRGGLDINPYRSDFEHPGESHRLARQ.

Substrate is bound at residue isoleucine 92–serine 94. Serine 94–lysine 95 serves as a coordination point for NADPH. Catalysis depends on cysteine 194, which acts as the Thioimide intermediate. Aspartate 201 (proton donor) is an active-site residue. A substrate-binding site is contributed by histidine 233–glutamate 234. Position 262–263 (arginine 262–glycine 263) interacts with NADPH.

The protein belongs to the GTP cyclohydrolase I family. QueF type 2 subfamily. As to quaternary structure, homodimer.

It localises to the cytoplasm. It carries out the reaction 7-aminomethyl-7-carbaguanine + 2 NADP(+) = 7-cyano-7-deazaguanine + 2 NADPH + 3 H(+). It functions in the pathway tRNA modification; tRNA-queuosine biosynthesis. Its function is as follows. Catalyzes the NADPH-dependent reduction of 7-cyano-7-deazaguanine (preQ0) to 7-aminomethyl-7-deazaguanine (preQ1). This Shewanella oneidensis (strain ATCC 700550 / JCM 31522 / CIP 106686 / LMG 19005 / NCIMB 14063 / MR-1) protein is NADPH-dependent 7-cyano-7-deazaguanine reductase.